A 60-amino-acid chain; its full sequence is Alpha-conotoxin-like 289 (60 aa).

Positions 1–16 are cleaved as a signal peptide; sequence MFTVFLLVVLATTVVS. A propeptide spanning residues 17 to 42 is cleaved from the precursor; that stretch reads FTSDRAFRGRNAAAKASGLVGLTDKR. A Pyrrolidone carboxylic acid modification is found at glutamine 43. Intrachain disulfides connect cysteine 45-cysteine 51 and cysteine 46-cysteine 59. Residues 47–49 are ser-Xaa-Pro motif, crucial for potent interaction with nAChR; that stretch reads SYP. Cysteine 59 is subject to Cysteine amide.

The protein belongs to the conotoxin A superfamily. As to expression, expressed by the venom duct.

It is found in the secreted. Functionally, alpha-conotoxins act on postsynaptic membranes, they bind to the nicotinic acetylcholine receptors (nAChR) and thus inhibit them. The chain is Alpha-conotoxin-like 289 from Conus ammiralis (Admiral cone).